A 126-amino-acid polypeptide reads, in one-letter code: Fatty acid-binding protein 1, liver (126 aa).

This sequence belongs to the calycin superfamily. Fatty-acid binding protein (FABP) family.

The protein localises to the cytoplasm. In terms of biological role, binds free fatty acids and their coenzyme A derivatives, bilirubin, and some other small molecules in the cytoplasm. May be involved in intracellular lipid transport. The specificity of axolotl L-FABP differs from that of LB-FABP. This is Fatty acid-binding protein 1, liver from Ambystoma mexicanum (Axolotl).